The primary structure comprises 509 residues: Anaerobic nitric oxide reductase flavorubredoxin (509 aa).

The tract at residues 30–210 is zinc metallo-hydrolase; that stretch reads LQGSSYNSYL…PFSRLVTAKI (181 aa). Positions 79, 81, 83, 147, 166, and 227 each coordinate Fe cation. A Flavodoxin-like domain is found at 254 to 393; the sequence is ITLFYDTMSN…VCREHGREIA (140 aa). FMN contacts are provided by residues 260–264 and 342–369; these read TMSNN and AFGS…ETTL. The Rubredoxin-like domain maps to 457–508; the sequence is SGCMQCSVCQWIYDPALGEPMQDVTPGTMWSDVPDSFLCPECGLGKDVFNPI. Fe cation-binding residues include cysteine 462, cysteine 465, cysteine 495, and cysteine 498.

This sequence in the N-terminal section; belongs to the zinc metallo-hydrolase group 3 family. As to quaternary structure, homotetramer. Fe cation is required as a cofactor. Requires FMN as cofactor.

It localises to the cytoplasm. It participates in nitrogen metabolism; nitric oxide reduction. In terms of biological role, anaerobic nitric oxide reductase; uses NADH to detoxify nitric oxide (NO), protecting several 4Fe-4S NO-sensitive enzymes. Has at least 2 reductase partners, only one of which (NorW, flavorubredoxin reductase) has been identified. NO probably binds to the di-iron center; electrons enter from the NorW at rubredoxin and are transferred sequentially to the FMN center and the di-iron center. Also able to function as an aerobic oxygen reductase. This chain is Anaerobic nitric oxide reductase flavorubredoxin, found in Pectobacterium atrosepticum (strain SCRI 1043 / ATCC BAA-672) (Erwinia carotovora subsp. atroseptica).